We begin with the raw amino-acid sequence, 320 residues long: Malate dehydrogenase (320 aa).

NAD(+) is bound by residues 10 to 15 (GSGMIG) and Asp34. Substrate is bound by residues Arg83 and Arg89. NAD(+) is bound by residues Asn96 and 119–121 (ITN). The substrate site is built by Asn121 and Arg152. Catalysis depends on His176, which acts as the Proton acceptor.

The protein belongs to the LDH/MDH superfamily. MDH type 3 family.

It catalyses the reaction (S)-malate + NAD(+) = oxaloacetate + NADH + H(+). Its function is as follows. Catalyzes the reversible oxidation of malate to oxaloacetate. This chain is Malate dehydrogenase, found in Brucella canis (strain ATCC 23365 / NCTC 10854 / RM-666).